The chain runs to 248 residues: DCN1-like protein 4 (248 aa).

Positions 1-35 (MPRGKRRAADTISDNMDHGQPKRARTSYTSIPTQQ) are disordered. Residues 26-35 (TSYTSIPTQQ) are compositionally biased toward polar residues. The DCUN1 domain occupies 47–235 (FSQKRCMAWF…MLDEFVEWLR (189 aa)).

Its subcellular location is the nucleus. In terms of biological role, inhibits neddylation of cullin components of SCF-type E3 ubiquitin ligase complexes and thus regulates SCF-type complex activity. Essential for development. Function inhibits cell proliferation and cell growth. In Drosophila melanogaster (Fruit fly), this protein is DCN1-like protein 4.